Reading from the N-terminus, the 410-residue chain is F-box/WD repeat-containing protein 4 (410 aa).

The 47-residue stretch at glycine 23 to isoleucine 69 folds into the F-box domain. 4 WD repeats span residues glycine 159–tyrosine 196, alanine 198–cysteine 235, proline 289–valine 327, and proline 333–alanine 372.

As to quaternary structure, part of a SCF (SKP1-cullin-F-box) protein ligase complex. Interacts with POUF51.

Its function is as follows. Probably recognizes and binds to some phosphorylated proteins and promotes their ubiquitination and degradation. Likely to be involved in key signaling pathways crucial for normal limb development. May participate in Wnt signaling. This is F-box/WD repeat-containing protein 4 (Fbxw4) from Mus musculus (Mouse).